A 1242-amino-acid chain; its full sequence is DNA polymerase catalytic subunit (1242 aa).

3 disordered regions span residues 14 to 38 (GAVA…RPPQ), 644 to 665 (LQSA…SSSS), and 1109 to 1162 (APQG…RKPP). The segment covering 653–665 (GVSPGSGSNSSSS) has biased composition (low complexity). The segment covering 1111-1125 (QGSSDNGDSVTTGVV) has biased composition (polar residues). The span at 1145–1155 (ESNRRGGEPAK) shows a compositional bias: basic and acidic residues.

Belongs to the DNA polymerase type-B family. As to quaternary structure, forms a complex with the ssDNA-binding protein UL57, the DNA polymerase processivity factor UL44, and the alkaline exonuclease UL98. Interacts with the putative helicase-primase complex composed of UL70, UL102 and UL105 proteins; these interactions may coordinate leading and lagging strand DNA synthesis at the replication fork.

The protein localises to the host nucleus. The catalysed reaction is DNA(n) + a 2'-deoxyribonucleoside 5'-triphosphate = DNA(n+1) + diphosphate. In terms of biological role, replicates viral genomic DNA in the late phase of lytic infection, producing long concatemeric DNA. The replication complex is composed of six viral proteins: the DNA polymerase, processivity factor, primase, primase-associated factor, helicase, and ssDNA-binding protein. In Homo sapiens (Human), this protein is DNA polymerase catalytic subunit (UL54).